Reading from the N-terminus, the 354-residue chain is Holliday junction branch migration complex subunit RuvB (354 aa).

The large ATPase domain (RuvB-L) stretch occupies residues Met1–Tyr183. Residues Arg23, Gly64, Lys67, Thr68, Ser69, Glu130–Phe132, Arg173, Tyr183, and Arg220 contribute to the ATP site. Thr68 lines the Mg(2+) pocket. Residues Ser184–Asp254 are small ATPAse domain (RuvB-S). Residues Ala257–Pro354 are head domain (RuvB-H). The DNA site is built by Arg312 and Arg317.

The protein belongs to the RuvB family. Homohexamer. Forms an RuvA(8)-RuvB(12)-Holliday junction (HJ) complex. HJ DNA is sandwiched between 2 RuvA tetramers; dsDNA enters through RuvA and exits via RuvB. An RuvB hexamer assembles on each DNA strand where it exits the tetramer. Each RuvB hexamer is contacted by two RuvA subunits (via domain III) on 2 adjacent RuvB subunits; this complex drives branch migration. In the full resolvosome a probable DNA-RuvA(4)-RuvB(12)-RuvC(2) complex forms which resolves the HJ.

Its subcellular location is the cytoplasm. The enzyme catalyses ATP + H2O = ADP + phosphate + H(+). In terms of biological role, the RuvA-RuvB-RuvC complex processes Holliday junction (HJ) DNA during genetic recombination and DNA repair, while the RuvA-RuvB complex plays an important role in the rescue of blocked DNA replication forks via replication fork reversal (RFR). RuvA specifically binds to HJ cruciform DNA, conferring on it an open structure. The RuvB hexamer acts as an ATP-dependent pump, pulling dsDNA into and through the RuvAB complex. RuvB forms 2 homohexamers on either side of HJ DNA bound by 1 or 2 RuvA tetramers; 4 subunits per hexamer contact DNA at a time. Coordinated motions by a converter formed by DNA-disengaged RuvB subunits stimulates ATP hydrolysis and nucleotide exchange. Immobilization of the converter enables RuvB to convert the ATP-contained energy into a lever motion, pulling 2 nucleotides of DNA out of the RuvA tetramer per ATP hydrolyzed, thus driving DNA branch migration. The RuvB motors rotate together with the DNA substrate, which together with the progressing nucleotide cycle form the mechanistic basis for DNA recombination by continuous HJ branch migration. Branch migration allows RuvC to scan DNA until it finds its consensus sequence, where it cleaves and resolves cruciform DNA. The sequence is that of Holliday junction branch migration complex subunit RuvB from Salinispora tropica (strain ATCC BAA-916 / DSM 44818 / JCM 13857 / NBRC 105044 / CNB-440).